The following is a 914-amino-acid chain: Neuropilin-1 (914 aa).

The N-terminal stretch at Met-1–Arg-18 is a signal peptide. The Extracellular portion of the chain corresponds to Leu-20 to Pro-847. 3 disulfides stabilise this stretch: Cys-25–Cys-52, Cys-80–Cys-102, and Cys-145–Cys-171. 2 consecutive CUB domains span residues Cys-25–Phe-139 and Cys-145–Ser-263. Asn-148 carries an N-linked (GlcNAc...) asparagine glycan. Ca(2+)-binding residues include Glu-193, Asp-207, and Asp-248. Residues Cys-204 and Cys-226 are joined by a disulfide bond. Residue Asn-259 is glycosylated (N-linked (GlcNAc...) asparagine). 2 disulfides stabilise this stretch: Cys-273-Cys-422 and Cys-429-Cys-581. F5/8 type C domains follow at residues Cys-273–Cys-422 and Cys-429–Cys-581. Asn-520 carries an N-linked (GlcNAc...) asparagine glycan. The O-linked (Xyl...) (chondroitin sulfate) serine; alternate glycan is linked to Ser-610. A glycan (O-linked (Xyl...) (heparan sulfate) serine; alternate) is linked at Ser-610. Residues Pro-636–Lys-801 form the MAM domain. A disordered region spans residues Ile-809–Glu-829. A compositionally biased stretch (polar residues) spans Ser-816–Tyr-825. A glycan (N-linked (GlcNAc...) asparagine) is linked at Asn-817. A helical membrane pass occupies residues Ile-848–Leu-870. The Cytoplasmic segment spans residues Tyr-871–Ala-914.

This sequence belongs to the neuropilin family. Homodimer, and heterodimer. As to expression, developing nervous system; optic tectum (layers D and E of SGFS), amacrine cells of retina, neurites of dorsal root ganglia. Also expressed in non-neuronal cells, e.g. blood vessels in the entire embryo.

It localises to the mitochondrion membrane. The protein localises to the cell membrane. In terms of biological role, receptor involved in the development of the cardiovascular system, in angiogenesis, in the formation of certain neuronal circuits and in organogenesis outside the nervous system. Mediates the chemorepulsant activity of semaphorins. Binding to VEGFA initiates a signaling pathway needed for motor neuron axon guidance and cell body migration, including for the caudal migration of facial motor neurons from rhombomere 4 to rhombomere 6 during embryonic development. Regulates mitochondrial iron transport via interaction. The protein is Neuropilin-1 (NRP1) of Gallus gallus (Chicken).